The sequence spans 329 residues: Type 2 lactosamine alpha-2,3-sialyltransferase (329 aa).

At 1–4 (MKGY) the chain is on the cytoplasmic side. A helical; Signal-anchor for type II membrane protein transmembrane segment spans residues 5-25 (LVAIFLSSIFLYYVLYCILWG). The Lumenal portion of the chain corresponds to 26 to 329 (TNGYWFPAEE…IKKKMVINLT (304 aa)). N-linked (GlcNAc...) asparagine glycosylation is found at Asn129, Asn181, Asn295, and Asn308.

This sequence belongs to the glycosyltransferase 29 family.

It is found in the golgi apparatus membrane. The catalysed reaction is a neolactoside nLc4Cer(d18:1(4E)) + CMP-N-acetyl-beta-neuraminate = a neolactoside IV(3)-alpha-NeuAc-nLc4Cer(d18:1(4E)) + CMP + H(+). It catalyses the reaction a beta-D-galactosyl-(1-&gt;4)-N-acetyl-beta-D-glucosaminyl derivative + CMP-N-acetyl-beta-neuraminate = an N-acetyl-alpha-neuraminyl-(2-&gt;3)-beta-D-galactosyl-(1-&gt;4)-N-acetyl-beta-D-glucosaminyl derivative + CMP + H(+). It carries out the reaction a neolactoside nLc6Cer(d18:1(4E)) + CMP-N-acetyl-beta-neuraminate = a neolactoside VI(3)-alpha-NeuNAc-nLc6Cer(d18:1(4E)) + CMP + H(+). Its function is as follows. Transfers the sialyl residue from CMP-N-acetyl-beta-neuraminate to the terminal galactose residue on sugar chains of glycoproteins and glycolipids. It's alpha-2,3-sialyltransferase activity is specific toward type II glycan chains (Galbeta1-4GlcNAc) on glycoproteins and glycolipids such as neolactosides nLc4Cer and nLc6Cer, whose sialyl-products serve as precursors for the Lewis X antigen. Critically involved in the synthesis of functional selectin ligands needed for neutrophil recruitment during inflammation and lymphocyte homing to the lymph nodes. The polypeptide is Type 2 lactosamine alpha-2,3-sialyltransferase (St3gal6) (Mus musculus (Mouse)).